Consider the following 445-residue polypeptide: 3-phosphoshikimate 1-carboxyvinyltransferase (445 aa).

The span at 1–20 (MSSTHPGRTIRSGATQNLSG) shows a compositional bias: polar residues. Residues 1–24 (MSSTHPGRTIRSGATQNLSGTIRP) are disordered. 3 residues coordinate 3-phosphoshikimate: Lys28, Ser29, and Arg33. Lys28 contacts phosphoenolpyruvate. Residues Gly101 and Arg129 each contribute to the phosphoenolpyruvate site. Ser174, Gln176, Asp322, and Lys349 together coordinate 3-phosphoshikimate. Gln176 contributes to the phosphoenolpyruvate binding site. Asp322 serves as the catalytic Proton acceptor. Residues Arg353 and Arg397 each contribute to the phosphoenolpyruvate site.

It belongs to the EPSP synthase family. In terms of assembly, monomer.

The protein localises to the cytoplasm. It carries out the reaction 3-phosphoshikimate + phosphoenolpyruvate = 5-O-(1-carboxyvinyl)-3-phosphoshikimate + phosphate. It functions in the pathway metabolic intermediate biosynthesis; chorismate biosynthesis; chorismate from D-erythrose 4-phosphate and phosphoenolpyruvate: step 6/7. Functionally, catalyzes the transfer of the enolpyruvyl moiety of phosphoenolpyruvate (PEP) to the 5-hydroxyl of shikimate-3-phosphate (S3P) to produce enolpyruvyl shikimate-3-phosphate and inorganic phosphate. This chain is 3-phosphoshikimate 1-carboxyvinyltransferase, found in Magnetococcus marinus (strain ATCC BAA-1437 / JCM 17883 / MC-1).